The primary structure comprises 264 residues: Agamous-like MADS-box protein AGL61 (264 aa).

The region spanning 62-122 is the MADS-box domain; sequence IGRQKIPMVK…KKPFSFGHPS (61 aa).

As to quaternary structure, interacts with PHE1/AGL37, PHE2/AGL38, AGL80 and AGL86. Forms a heterodimer with AGL80. As to expression, expressed exclusively in the central cell of the female gametophyte and in early endosperm.

The protein resides in the nucleus. Probable transcription factor. Controls central cell differentiation during female gametophyte development. The sequence is that of Agamous-like MADS-box protein AGL61 (AGL61) from Arabidopsis thaliana (Mouse-ear cress).